Reading from the N-terminus, the 853-residue chain is DNA mismatch repair protein MutS (853 aa).

Residue 613-620 coordinates ATP; it reads GPNMGGKS.

The protein belongs to the DNA mismatch repair MutS family.

This protein is involved in the repair of mismatches in DNA. It is possible that it carries out the mismatch recognition step. This protein has a weak ATPase activity. In Vibrio campbellii (strain ATCC BAA-1116), this protein is DNA mismatch repair protein MutS.